A 491-amino-acid chain; its full sequence is CGFSTVGSGFGSRAFSCVSACGPRPGRCCITAAPYRGISCYRGLTGGFGSRSVCGGFRAGSCGRSFGYRSGGVCGPSPPCITTVSVNESLLTPLNLEIDPNAQCVKQEEKEQIKCLNNRFAAFIDKVRFLEQQNKLLETKLQFFQNRQCCESNLEPLFEGYIETLRREAECVEADSGRLSSELNHVQEVLEGYKKKYEQEVALRATAENEFVALKKDVDCAYVRKSDLEANSEALIQEIDFLRRLYQEEIRVLQANISDTSVIVKMDNSRDLNMDCIVAEIKAQYDDIASRSRAEAESWYRSKCEEIKATVIRHGETLRRTKEEINELNRVIQRLTAEVENAKCQNSKLEAAVTQAEQQGEVALNDARCKLAGLEEALQKAKQDMACLLKEYQEVMNSKLGLDIEIATYRRLLEGEEQRLCEGVGAVNVCVSSSRGGVVCGDLCVSGSRPVTGSVCSAPCSGNLAVSTGLCAPCGQLNTTCGGGSCSLGRC.

Residue Cys1 is modified to Blocked amino end (Cys). The tract at residues 1–109 (CGFSTVGSGF…PNAQCVKQEE (109 aa)) is head. Residues 109-420 (EKEQIKCLNN…RLLEGEEQRL (312 aa)) form the IF rod domain. The tract at residues 110–144 (KEQIKCLNNRFAAFIDKVRFLEQQNKLLETKLQFF) is coil 1A. A linker 1 region spans residues 145–154 (QNRQCCESNL). Residues 155-255 (EPLFEGYIET…YQEEIRVLQA (101 aa)) are coil 1B. A linker 12 region spans residues 256 to 272 (NISDTSVIVKMDNSRDL). Residues 273–416 (NMDCIVAEIK…ATYRRLLEGE (144 aa)) are coil 2. The segment at 417 to 491 (EQRLCEGVGA…GGGSCSLGRC (75 aa)) is tail.

The protein belongs to the intermediate filament family.

Its function is as follows. Wool microfibrillar keratin. This is Keratin, type II microfibrillar, component 7C from Ovis aries (Sheep).